The chain runs to 360 residues: Peptide chain release factor 1 (360 aa).

An N5-methylglutamine modification is found at Gln-235.

The protein belongs to the prokaryotic/mitochondrial release factor family. Post-translationally, methylated by PrmC. Methylation increases the termination efficiency of RF1.

It localises to the cytoplasm. Functionally, peptide chain release factor 1 directs the termination of translation in response to the peptide chain termination codons UAG and UAA. In Cupriavidus pinatubonensis (strain JMP 134 / LMG 1197) (Cupriavidus necator (strain JMP 134)), this protein is Peptide chain release factor 1.